We begin with the raw amino-acid sequence, 456 residues long: Chitobiosyldiphosphodolichol beta-mannosyltransferase (456 aa).

Over 1-22 (MGEIIKYKGFDHVWQYSGPWLY) the chain is Lumenal. A helical transmembrane segment spans residues 23 to 43 (CLIGIYISLPVLAYHILPWIF). The Cytoplasmic segment spans residues 44-103 (HKNRSNKRKTISIFVLGDLGHSPRMCYHASSFSKLDYYVNLCGYVETEPSHQIVDDVNID). An intramembrane region (helical) is located at residues 104 to 124 (IIPIEAIKNTNNLPYIMFAIL). Topologically, residues 125 to 456 (KVVRQCGKIW…TFSSIFENKS (332 aa)) are cytoplasmic.

Belongs to the glycosyltransferase group 1 family.

The protein resides in the endoplasmic reticulum membrane. It catalyses the reaction an N,N'-diacetylchitobiosyl-diphospho-di-trans,poly-cis-dolichol + GDP-alpha-D-mannose = a beta-D-Man-(1-&gt;4)-beta-D-GlcNAc-(1-&gt;4)-alpha-D-GlcNAc-diphospho-di-trans,poly-cis-dolichol + GDP + H(+). It functions in the pathway protein modification; protein glycosylation. Its function is as follows. Participates in the formation of the lipid-linked precursor oligosaccharide for N-glycosylation. Involved in assembling the dolichol-pyrophosphate-GlcNAc(2)-Man(5) intermediate on the cytoplasmic surface of the ER. The polypeptide is Chitobiosyldiphosphodolichol beta-mannosyltransferase (ALG1) (Candida albicans (strain SC5314 / ATCC MYA-2876) (Yeast)).